Reading from the N-terminus, the 395-residue chain is Acetylornithine aminotransferase (395 aa).

Residues 117–118 (GA) and F144 each bind pyridoxal 5'-phosphate. A N(2)-acetyl-L-ornithine-binding site is contributed by R147. 230–233 (DEVQ) contacts pyridoxal 5'-phosphate. K259 is modified (N6-(pyridoxal phosphate)lysine). Residue S285 coordinates N(2)-acetyl-L-ornithine. T286 serves as a coordination point for pyridoxal 5'-phosphate.

The protein belongs to the class-III pyridoxal-phosphate-dependent aminotransferase family. ArgD subfamily. Homodimer. The cofactor is pyridoxal 5'-phosphate.

It localises to the cytoplasm. It carries out the reaction N(2)-acetyl-L-ornithine + 2-oxoglutarate = N-acetyl-L-glutamate 5-semialdehyde + L-glutamate. The protein operates within amino-acid biosynthesis; L-arginine biosynthesis; N(2)-acetyl-L-ornithine from L-glutamate: step 4/4. The sequence is that of Acetylornithine aminotransferase from Methanosarcina mazei (strain ATCC BAA-159 / DSM 3647 / Goe1 / Go1 / JCM 11833 / OCM 88) (Methanosarcina frisia).